Consider the following 301-residue polypeptide: Cutinase (301 aa).

The first 40 residues, 1 to 40 (MAVMTPRRERSSLLSRALQVTAAAATALVTAVSLAAPAHA), serve as a signal peptide directing secretion. Poly(ethylene terephthalate) is bound at residue Tyr-100. The active-site Nucleophile is the Ser-170. Poly(ethylene terephthalate)-binding residues include Met-171 and Trp-195. Catalysis depends on charge relay system residues Asp-216 and His-248. The cysteines at positions 281 and 299 are disulfide-linked.

The protein belongs to the AB hydrolase superfamily.

The protein localises to the secreted. Its subcellular location is the periplasm. It carries out the reaction a butanoate ester + H2O = an aliphatic alcohol + butanoate + H(+). It catalyses the reaction (ethylene terephthalate)(n) + H2O = (ethylene terephthalate)(n-1) + 4-[(2-hydroxyethoxy)carbonyl]benzoate + H(+). The catalysed reaction is cutin + H2O = cutin monomers.. Activated by magnesium ions. Activated by calcium ions. Inhibited by the serine hydrolase inhibitor phenylmethanesulfonyl fluoride (PMSF). Functionally, catalyzes the hydrolysis of cutin, a polyester that forms the structure of plant cuticle. Shows esterase activity towards p-nitrophenol-linked aliphatic esters (pNP-aliphatic esters). Also hydrolyzes the triglyceride triolein. Capable of degrading the plastic poly(ethylene terephthalate) (PET), the most abundant polyester plastic in the world. This Thermobifida fusca (strain YX) protein is Cutinase.